The primary structure comprises 336 residues: Biotin synthase (336 aa).

Positions 55-282 (NRVQLSKLLN…QSHVRLTAGR (228 aa)) constitute a Radical SAM core domain. Positions 70, 74, and 77 each coordinate [4Fe-4S] cluster. [2Fe-2S] cluster is bound by residues C114, C145, C205, and R277.

It belongs to the radical SAM superfamily. Biotin synthase family. As to quaternary structure, homodimer. The cofactor is [4Fe-4S] cluster. Requires [2Fe-2S] cluster as cofactor.

It carries out the reaction (4R,5S)-dethiobiotin + (sulfur carrier)-SH + 2 reduced [2Fe-2S]-[ferredoxin] + 2 S-adenosyl-L-methionine = (sulfur carrier)-H + biotin + 2 5'-deoxyadenosine + 2 L-methionine + 2 oxidized [2Fe-2S]-[ferredoxin]. It participates in cofactor biosynthesis; biotin biosynthesis; biotin from 7,8-diaminononanoate: step 2/2. Its function is as follows. Catalyzes the conversion of dethiobiotin (DTB) to biotin by the insertion of a sulfur atom into dethiobiotin via a radical-based mechanism. This Brucella anthropi (strain ATCC 49188 / DSM 6882 / CCUG 24695 / JCM 21032 / LMG 3331 / NBRC 15819 / NCTC 12168 / Alc 37) (Ochrobactrum anthropi) protein is Biotin synthase.